A 568-amino-acid chain; its full sequence is Tyrosine-protein kinase transforming protein Src (568 aa).

The interval 1 to 58 (MGSSKSKPKDPSQRRRSLEPPDSTHHGGFPASQTPNKTAAPDTHRTPSRSFGTVATEP) is disordered. Residue Gly-2 is the site of N-myristoyl glycine; by host attachment. Basic and acidic residues predominate over residues 7–25 (KPKDPSQRRRSLEPPDSTH). In terms of domain architecture, SH3 spans 81 to 142 (GGVTTFVALY…PSNYVAPSDS (62 aa)). An SH2 domain is found at 148-245 (WYFGKITRRE…GLCHRLTNVC (98 aa)). The Protein kinase domain maps to 267–520 (LRLEVKLGQG…YLQAFLEDYF (254 aa)). Residues 273 to 281 (LGQGCFGEV) and Lys-295 contribute to the ATP site. Catalysis depends on Asp-386, which acts as the Proton acceptor. Tyr-416 is subject to Phosphotyrosine; by autocatalysis.

This sequence belongs to the protein kinase superfamily. Tyr protein kinase family. SRC subfamily. In terms of processing, the phosphorylated form is termed pp60v-src.

The enzyme catalyses L-tyrosyl-[protein] + ATP = O-phospho-L-tyrosyl-[protein] + ADP + H(+). In terms of biological role, this phosphoprotein, required for both the initiation and the maintenance of neoplastic transformation, is a protein kinase that catalyzes the phosphorylation of tyrosine residues in vitro. In Galliformes, this protein is Tyrosine-protein kinase transforming protein Src (V-SRC).